Here is a 1602-residue protein sequence, read N- to C-terminus: MAP kinase-activating death domain protein (1602 aa).

A uDENN domain is found at 13-267; that stretch reads YLVIVGARHP…VPVSGQKRVD (255 aa). Over residues 105-121 the composition is skewed to basic and acidic residues; the sequence is PKEKAEGGAGPRGKEGA. A disordered region spans residues 105–167; the sequence is PKEKAEGGAG…GKRRAKAGNR (63 aa). Over residues 126–137 the composition is skewed to low complexity; that stretch reads ASEEAATESSES. The segment covering 138–156 has biased composition (polar residues); sequence GSTLQPPSADSTPDVNQSP. Serine 155 is modified (phosphoserine). Residues 157–166 show a composition bias toward basic residues; that stretch reads RGKRRAKAGN. The region spanning 288–428 is the cDENN domain; sequence RFTLVDFPLH…ESLELKKHLK (141 aa). The region spanning 430-564 is the dDENN domain; sequence ALASMSLNTQ…LNPSNYAFQR (135 aa). Disordered stretches follow at residues 603-635 and 676-840; these read ALSV…SSYS and QPQK…NSTE. The segment covering 614-629 has biased composition (acidic residues); it reads SDPTDDSGSDSMDYDD. Phosphoserine is present on residues serine 688 and serine 691. Polar residues predominate over residues 688–698; it reads SENSQENLPLR. Residues 699–711 show a composition bias toward low complexity; sequence SSSSTTASSSPST. Serine 778 carries the post-translational modification Phosphoserine. Residues 789–803 are compositionally biased toward polar residues; it reads ESYTPRFSQHASGSR. 3 positions are modified to phosphoserine: serine 812, serine 817, and serine 819. Residues 826–839 are compositionally biased toward low complexity; it reads RASSPNSTVSNNST. Phosphoserine is present on residues serine 857, serine 861, serine 895, serine 900, and serine 909. Disordered stretches follow at residues 870–920, 1030–1089, and 1113–1231; these read KGAR…SSEN, KEPD…DTRS, and TEEK…RSSE. A compositionally biased stretch (polar residues) spans 911–920; the sequence is QGRSSNSSEN. A Phosphoserine modification is found at serine 1038. Phosphothreonine is present on residues threonine 1040 and threonine 1045. Serine 1089 carries the post-translational modification Phosphoserine. The span at 1119–1134 shows a compositional bias: polar residues; that stretch reads QISADSGVSLASASQR. Positions 1151–1162 are enriched in low complexity; it reads SSSQDSEVSNSS. Polar residues predominate over residues 1191–1209; sequence SRATLSDSEIETNSATSTI. At threonine 1194 the chain carries Phosphothreonine. Phosphoserine is present on residues serine 1196 and serine 1225. Positions 1295–1370 constitute a Death domain; sequence GMDQGPQEMI…GLVYSQQINE (76 aa).

Belongs to the MADD family. In terms of assembly, interacts (via death domain) with TNFRSF1A (via death domain). Interacts with PIDD1. Interacts with YWHAZ. Interacts (via death domain) with KIF1B; links the motor KIF1B to Rab3-carrying vesicles in anterograde synaptic vesicle transport. Interacts with KIF1A. Interacts (via uDENN domain) with RAB3A, RAB3B, RAB3C and RAB3D; the GTP-bound form of the Rab proteins is preferred for interaction. In terms of tissue distribution, expressed in all tissues examined with the highest expression in brain.

It is found in the cell membrane. It localises to the cytoplasm. The protein localises to the cell projection. Its subcellular location is the axon. Guanyl-nucleotide exchange factor that regulates small GTPases of the Rab family. Converts GDP-bound inactive form of RAB27A and RAB27B to the GTP-bound active forms. Converts GDP-bound inactive form of RAB3A, RAB3C and RAB3D to the GTP-bound active forms, GTPases involved in synaptic vesicle exocytosis and vesicle secretion. Plays a role in synaptic vesicle formation and in vesicle trafficking at the neuromuscular junction. Involved in up-regulating a post-docking step of synaptic exocytosis in central synapses. Probably by binding to the motor proteins KIF1B and KIF1A, mediates motor-dependent transport of GTP-RAB3A-positive vesicles to the presynaptic nerve terminals. Plays a role in TNFA-mediated activation of the MAPK pathway, including ERK1/2. May link TNFRSF1A with MAP kinase activation. May be involved in the regulation of TNFA-induced apoptosis. The protein is MAP kinase-activating death domain protein of Rattus norvegicus (Rat).